Reading from the N-terminus, the 459-residue chain is Elongation factor 1-alpha 4 (459 aa).

One can recognise a tr-type G domain in the interval 5-242 (KTHINIVVIG…DCIIPPQRPT (238 aa)). Residues 14 to 21 (GHVDSGKS) form a G1 region. Residues 70–74 (GITID) are G2. The tract at residues 91 to 94 (DAPG) is G3. A G4 region spans residues 153 to 156 (NKMD). Residues 194-196 (SGF) form a G5 region. A 5-glutamyl glycerylphosphorylethanolamine mark is found at Glu301 and Glu374.

It belongs to the TRAFAC class translation factor GTPase superfamily. Classic translation factor GTPase family. EF-Tu/EF-1A subfamily.

It localises to the cytoplasm. Functionally, this protein promotes the GTP-dependent binding of aminoacyl-tRNA to the A-site of ribosomes during protein biosynthesis. The protein is Elongation factor 1-alpha 4 (eft-4) of Oscheius tipulae.